The following is a 214-amino-acid chain: Imidazole glycerol phosphate synthase subunit HisH (214 aa).

Residues 2-214 form the Glutamine amidotransferase type-1 domain; that stretch reads RVALIDYGSG…LIANFLRWAP (213 aa). Catalysis depends on Cys-88, which acts as the Nucleophile. Active-site residues include His-194 and Glu-196.

In terms of assembly, heterodimer of HisH and HisF.

The protein resides in the cytoplasm. The catalysed reaction is 5-[(5-phospho-1-deoxy-D-ribulos-1-ylimino)methylamino]-1-(5-phospho-beta-D-ribosyl)imidazole-4-carboxamide + L-glutamine = D-erythro-1-(imidazol-4-yl)glycerol 3-phosphate + 5-amino-1-(5-phospho-beta-D-ribosyl)imidazole-4-carboxamide + L-glutamate + H(+). The enzyme catalyses L-glutamine + H2O = L-glutamate + NH4(+). The protein operates within amino-acid biosynthesis; L-histidine biosynthesis; L-histidine from 5-phospho-alpha-D-ribose 1-diphosphate: step 5/9. Functionally, IGPS catalyzes the conversion of PRFAR and glutamine to IGP, AICAR and glutamate. The HisH subunit catalyzes the hydrolysis of glutamine to glutamate and ammonia as part of the synthesis of IGP and AICAR. The resulting ammonia molecule is channeled to the active site of HisF. The polypeptide is Imidazole glycerol phosphate synthase subunit HisH (Rhodospirillum rubrum (strain ATCC 11170 / ATH 1.1.1 / DSM 467 / LMG 4362 / NCIMB 8255 / S1)).